A 286-amino-acid polypeptide reads, in one-letter code: Nucleotide-binding protein PLES_48441 (286 aa).

8–15 (GRSGSGKS) is an ATP binding site. GTP is bound at residue 60–63 (DARN).

It belongs to the RapZ-like family.

In terms of biological role, displays ATPase and GTPase activities. This is Nucleotide-binding protein PLES_48441 from Pseudomonas aeruginosa (strain LESB58).